Here is a 241-residue protein sequence, read N- to C-terminus: Small ribosomal subunit protein uS10m (241 aa).

Residues 1–54 (MIAGVLRRSSLPSRQTLSAALASFNSCISHNLTPATTGASVSSRFTLASSPNSF) constitute a mitochondrion transit peptide.

Belongs to the universal ribosomal protein uS10 family. In terms of assembly, component of the mitochondrial ribosome small subunit.

The protein resides in the mitochondrion. The polypeptide is Small ribosomal subunit protein uS10m (RPS10) (Arabidopsis thaliana (Mouse-ear cress)).